Reading from the N-terminus, the 342-residue chain is Ferredoxin--NADP reductase (342 aa).

Residues Cys-17, Asp-36, Gln-44, Tyr-49, Val-89, Phe-124, Asp-289, and Thr-330 each coordinate FAD.

Belongs to the ferredoxin--NADP reductase type 2 family. In terms of assembly, homodimer. Requires FAD as cofactor.

The catalysed reaction is 2 reduced [2Fe-2S]-[ferredoxin] + NADP(+) + H(+) = 2 oxidized [2Fe-2S]-[ferredoxin] + NADPH. The polypeptide is Ferredoxin--NADP reductase (Rhodopseudomonas palustris (strain ATCC BAA-98 / CGA009)).